Here is a 234-residue protein sequence, read N- to C-terminus: 3,4-dihydroxy-2-butanone 4-phosphate synthase (234 aa).

Residues R39–E40, D44, R152–T156, and E176 each bind D-ribulose 5-phosphate. E40 lines the Mg(2+) pocket. H155 contacts Mg(2+).

Belongs to the DHBP synthase family. Homodimer. Mg(2+) serves as cofactor. It depends on Mn(2+) as a cofactor.

It carries out the reaction D-ribulose 5-phosphate = (2S)-2-hydroxy-3-oxobutyl phosphate + formate + H(+). The protein operates within cofactor biosynthesis; riboflavin biosynthesis; 2-hydroxy-3-oxobutyl phosphate from D-ribulose 5-phosphate: step 1/1. In terms of biological role, catalyzes the conversion of D-ribulose 5-phosphate to formate and 3,4-dihydroxy-2-butanone 4-phosphate. The sequence is that of 3,4-dihydroxy-2-butanone 4-phosphate synthase from Pelobacter propionicus (strain DSM 2379 / NBRC 103807 / OttBd1).